The chain runs to 272 residues: Elongation factor Ts (272 aa).

The involved in Mg(2+) ion dislocation from EF-Tu stretch occupies residues threonine 76–valine 79.

It belongs to the EF-Ts family.

Its subcellular location is the cytoplasm. In terms of biological role, associates with the EF-Tu.GDP complex and induces the exchange of GDP to GTP. It remains bound to the aminoacyl-tRNA.EF-Tu.GTP complex up to the GTP hydrolysis stage on the ribosome. The sequence is that of Elongation factor Ts from Corynebacterium jeikeium (strain K411).